The chain runs to 222 residues: ATP synthase F(0) complex subunit a (222 aa).

Transmembrane regions (helical) follow at residues phenylalanine 8–proline 28, tryptophan 64–leucine 84, glutamine 93–phenylalanine 113, glutamine 127–isoleucine 147, isoleucine 160–isoleucine 180, and isoleucine 197–histidine 219.

It belongs to the ATPase A chain family. As to quaternary structure, component of the ATP synthase complex composed at least of ATP5F1A/subunit alpha, ATP5F1B/subunit beta, ATP5MC1/subunit c (homooctomer), MT-ATP6/subunit a, MT-ATP8/subunit 8, ATP5ME/subunit e, ATP5MF/subunit f, ATP5MG/subunit g, ATP5MK/subunit k, ATP5MJ/subunit j, ATP5F1C/subunit gamma, ATP5F1D/subunit delta, ATP5F1E/subunit epsilon, ATP5PF/subunit F6, ATP5PB/subunit b, ATP5PD/subunit d, ATP5PO/subunit OSCP. ATP synthase complex consists of a soluble F(1) head domain (subunits alpha(3) and beta(3)) - the catalytic core - and a membrane F(0) domain - the membrane proton channel (subunits c, a, 8, e, f, g, k and j). These two domains are linked by a central stalk (subunits gamma, delta, and epsilon) rotating inside the F1 region and a stationary peripheral stalk (subunits F6, b, d, and OSCP). Interacts with DNAJC30; interaction is direct.

It localises to the mitochondrion inner membrane. It catalyses the reaction H(+)(in) = H(+)(out). Its function is as follows. Subunit a, of the mitochondrial membrane ATP synthase complex (F(1)F(0) ATP synthase or Complex V) that produces ATP from ADP in the presence of a proton gradient across the membrane which is generated by electron transport complexes of the respiratory chain. ATP synthase complex consist of a soluble F(1) head domain - the catalytic core - and a membrane F(1) domain - the membrane proton channel. These two domains are linked by a central stalk rotating inside the F(1) region and a stationary peripheral stalk. During catalysis, ATP synthesis in the catalytic domain of F(1) is coupled via a rotary mechanism of the central stalk subunits to proton translocation. With the subunit c (ATP5MC1), forms the proton-conducting channel in the F(0) domain, that contains two crucial half-channels (inlet and outlet) that facilitate proton movement from the mitochondrial intermembrane space (IMS) into the matrix. Protons are taken up via the inlet half-channel and released through the outlet half-channel, following a Grotthuss mechanism. The sequence is that of ATP synthase F(0) complex subunit a from Loxodonta africana (African elephant).